Here is a 235-residue protein sequence, read N- to C-terminus: Large ribosomal subunit protein uL1 (235 aa).

Belongs to the universal ribosomal protein uL1 family. In terms of assembly, part of the 50S ribosomal subunit.

Binds directly to 23S rRNA. The L1 stalk is quite mobile in the ribosome, and is involved in E site tRNA release. In terms of biological role, protein L1 is also a translational repressor protein, it controls the translation of the L11 operon by binding to its mRNA. This Prochlorococcus marinus (strain MIT 9303) protein is Large ribosomal subunit protein uL1.